The following is a 503-amino-acid chain: Maturase K (503 aa).

This sequence belongs to the intron maturase 2 family. MatK subfamily.

It localises to the plastid. The protein localises to the chloroplast. Its function is as follows. Usually encoded in the trnK tRNA gene intron. Probably assists in splicing its own and other chloroplast group II introns. This chain is Maturase K, found in Syzygium australe (Brush cherry).